Reading from the N-terminus, the 124-residue chain is Small ribosomal subunit protein uS12 (124 aa).

3-methylthioaspartic acid is present on D89.

Belongs to the universal ribosomal protein uS12 family. Part of the 30S ribosomal subunit. Contacts proteins S8 and S17. May interact with IF1 in the 30S initiation complex.

In terms of biological role, with S4 and S5 plays an important role in translational accuracy. Interacts with and stabilizes bases of the 16S rRNA that are involved in tRNA selection in the A site and with the mRNA backbone. Located at the interface of the 30S and 50S subunits, it traverses the body of the 30S subunit contacting proteins on the other side and probably holding the rRNA structure together. The combined cluster of proteins S8, S12 and S17 appears to hold together the shoulder and platform of the 30S subunit. The protein is Small ribosomal subunit protein uS12 of Hydrogenovibrio crunogenus (strain DSM 25203 / XCL-2) (Thiomicrospira crunogena).